A 334-amino-acid chain; its full sequence is Galactinol synthase 3 (334 aa).

The active site involves K97. Mn(2+) contacts are provided by D113, D115, and H251.

It belongs to the glycosyltransferase 8 family. Galactosyltransferase subfamily. A divalent metal cation is required as a cofactor.

It localises to the cytoplasm. The catalysed reaction is myo-inositol + UDP-alpha-D-galactose = alpha-D-galactosyl-(1-&gt;3)-1D-myo-inositol + UDP + H(+). In terms of biological role, galactinol synthase involved in the biosynthesis of raffinose family oligosaccharides (RFOs) that function as osmoprotectants. May promote plant stress tolerance. The chain is Galactinol synthase 3 (GOLS3) from Arabidopsis thaliana (Mouse-ear cress).